We begin with the raw amino-acid sequence, 372 residues long: tRNA-specific 2-thiouridylase MnmA (372 aa).

ATP contacts are provided by residues 16-23 and methionine 42; that span reads GMSGGVDS. Residues 102–104 are interaction with target base in tRNA; sequence NPD. The active-site Nucleophile is cysteine 107. Cysteine 107 and cysteine 205 form a disulfide bridge. Residue glycine 132 coordinates ATP. The tract at residues 155–157 is interaction with tRNA; sequence KDQ. Residue cysteine 205 is the Cysteine persulfide intermediate of the active site. The interval 317–318 is interaction with tRNA; the sequence is RY.

Belongs to the MnmA/TRMU family.

Its subcellular location is the cytoplasm. It catalyses the reaction S-sulfanyl-L-cysteinyl-[protein] + uridine(34) in tRNA + AH2 + ATP = 2-thiouridine(34) in tRNA + L-cysteinyl-[protein] + A + AMP + diphosphate + H(+). Its function is as follows. Catalyzes the 2-thiolation of uridine at the wobble position (U34) of tRNA, leading to the formation of s(2)U34. The chain is tRNA-specific 2-thiouridylase MnmA from Shewanella sp. (strain MR-7).